The primary structure comprises 296 residues: 33 kDa chaperonin (296 aa).

Disulfide bonds link Cys-233–Cys-235 and Cys-267–Cys-270.

This sequence belongs to the HSP33 family. Under oxidizing conditions two disulfide bonds are formed involving the reactive cysteines. Under reducing conditions zinc is bound to the reactive cysteines and the protein is inactive.

Its subcellular location is the cytoplasm. Redox regulated molecular chaperone. Protects both thermally unfolding and oxidatively damaged proteins from irreversible aggregation. Plays an important role in the bacterial defense system toward oxidative stress. The protein is 33 kDa chaperonin of Actinobacillus pleuropneumoniae serotype 3 (strain JL03).